We begin with the raw amino-acid sequence, 206 residues long: Large ribosomal subunit protein bL25 (206 aa).

A disordered region spans residues 168–206 (DPEESVVTVEVPEDASESTAAPEAAAPAADAAAPAADAK). The span at 184 to 206 (ESTAAPEAAAPAADAAAPAADAK) shows a compositional bias: low complexity.

It belongs to the bacterial ribosomal protein bL25 family. CTC subfamily. In terms of assembly, part of the 50S ribosomal subunit; part of the 5S rRNA/L5/L18/L25 subcomplex. Contacts the 5S rRNA. Binds to the 5S rRNA independently of L5 and L18.

In terms of biological role, this is one of the proteins that binds to the 5S RNA in the ribosome where it forms part of the central protuberance. This is Large ribosomal subunit protein bL25 from Bifidobacterium longum (strain DJO10A).